The following is a 353-amino-acid chain: Protein RecA (353 aa).

G64–T71 serves as a coordination point for ATP. The segment at L331–E353 is disordered. Over residues S335–K346 the composition is skewed to basic and acidic residues.

Belongs to the RecA family.

It is found in the cytoplasm. Can catalyze the hydrolysis of ATP in the presence of single-stranded DNA, the ATP-dependent uptake of single-stranded DNA by duplex DNA, and the ATP-dependent hybridization of homologous single-stranded DNAs. It interacts with LexA causing its activation and leading to its autocatalytic cleavage. In Macrococcus caseolyticus (strain JCSC5402) (Macrococcoides caseolyticum), this protein is Protein RecA.